We begin with the raw amino-acid sequence, 530 residues long: Proline--tRNA ligase, cytoplasmic (530 aa).

Belongs to the class-II aminoacyl-tRNA synthetase family.

The protein resides in the cytoplasm. It localises to the cytosol. The enzyme catalyses tRNA(Pro) + L-proline + ATP = L-prolyl-tRNA(Pro) + AMP + diphosphate. In terms of biological role, catalyzes the attachment of proline to tRNA(Pro) in a two-step reaction: proline is first activated by ATP to form Pro-AMP and then transferred to the acceptor end of tRNA(Pro). This is Proline--tRNA ligase, cytoplasmic from Arabidopsis thaliana (Mouse-ear cress).